The following is a 199-amino-acid chain: Recombination protein RecR (199 aa).

The C4-type zinc-finger motif lies at 57 to 72; it reads CPICGNITEKEICDIC. The Toprim domain maps to 80–176; sequence TTIMVVEQPK…KVTRLAAGLS (97 aa).

This sequence belongs to the RecR family.

May play a role in DNA repair. It seems to be involved in an RecBC-independent recombinational process of DNA repair. It may act with RecF and RecO. This Lactobacillus acidophilus (strain ATCC 700396 / NCK56 / N2 / NCFM) protein is Recombination protein RecR.